Here is a 134-residue protein sequence, read N- to C-terminus: Profilin-4 (134 aa).

A disulfide bond links C13 and C118. Residues A84–T100 carry the Involved in PIP2 interaction motif. T114 bears the Phosphothreonine mark.

This sequence belongs to the profilin family. Occurs in many kinds of cells as a complex with monomeric actin in a 1:1 ratio. In terms of processing, phosphorylated by MAP kinases.

The protein localises to the cytoplasm. The protein resides in the cytoskeleton. In terms of biological role, binds to actin and affects the structure of the cytoskeleton. At high concentrations, profilin prevents the polymerization of actin, whereas it enhances it at low concentrations. The chain is Profilin-4 from Olea europaea (Common olive).